A 521-amino-acid chain; its full sequence is Cytochrome P450 monooxygenase 105 (521 aa).

Residues 12–32 (GVASPATLAVAAVTFLTALVL) traverse the membrane as a helical segment. Residues Asn-218, Asn-274, and Asn-317 are each glycosylated (N-linked (GlcNAc...) asparagine). Residue Cys-449 coordinates heme.

This sequence belongs to the cytochrome P450 family. The cofactor is heme.

It is found in the membrane. The protein operates within secondary metabolite biosynthesis. In terms of biological role, cytochrome P450 monooxygenase that is able to use anthracene, carbazole, pyrene, phenanthrene and trans-stilbene as substrates for oxidation. These multifunctional properties against a series of polycyclic aromatic hydrocarbons (PAHs) suggest that CYP105 would play important roles, at least in part, in fungal metabolic systems involved in xenobiotic detoxification. The chain is Cytochrome P450 monooxygenase 105 from Postia placenta (strain ATCC 44394 / Madison 698-R) (Brown rot fungus).